Reading from the N-terminus, the 610-residue chain is Menin (610 aa).

The tract at residues 214–390 (GVAERSWLYL…SLLEAGEERP (177 aa)) is interaction with FANCD2. A disordered region spans residues 462 to 552 (AEAAEAEELW…SPPPEGPVLT (91 aa)). Over residues 484-500 (RRESKPEEPPPPKKPAL) the composition is skewed to basic and acidic residues. 2 positions are modified to phosphoserine: Ser-487 and Ser-543. Pro residues predominate over residues 537–548 (APAPAASPPPEG). Phosphothreonine is present on Thr-594.

Component of the MLL-HCF complex, at least composed of KMT2A/MLL1, MEN1, ASH2L, RBBP5, DPY30, WDR5, HCFC1 and HCFC2. Component of the menin-associated histone methyltransferase complex, at least composed of KMT2B/MLL4, MEN1, ASH2L, RBBP5, DPY30 and WDR5. Interacts with POLR2B. Interacts with POLR2A phosphorylated at 'Ser-5', but not with the unphosphorylated, nor 'Ser-2' phosphorylated POLR2A forms. Interacts with FANCD2 and DBF4. Interacts with SMAD3, but not with SMAD2, nor SMAD4. Directly interacts with NFKB1, NFKB2 and RELA. Interacts with JUND (via MBM motif); inhibits the interaction of JUND with MAPK10 and the phosphorylation of JUND by MAP kinases MAPK8 and MAPK10. Interacts with KMT2A (via MBM motif). The KMT2A-MEN1 complex interacts with PSIP1 with a greater affinity as MEN1 enhances interaction of KMT2A with PSIP1.

Its subcellular location is the nucleus. Essential component of a MLL/SET1 histone methyltransferase (HMT) complex, a complex that specifically methylates 'Lys-4' of histone H3 (H3K4). Functions as a transcriptional regulator. Binds to the TERT promoter and represses telomerase expression. Plays a role in TGFB1-mediated inhibition of cell-proliferation, possibly regulating SMAD3 transcriptional activity. Represses JUND-mediated transcriptional activation on AP1 sites, as well as that mediated by NFKB subunit RELA. Positively regulates HOXC8 and HOXC6 gene expression. May be involved in normal hematopoiesis through the activation of HOXA9 expression. May be involved in DNA repair. This chain is Menin (MEN1), found in Canis lupus familiaris (Dog).